The following is a 488-amino-acid chain: UDP-N-acetylmuramate--L-alanine ligase (488 aa).

Residue 127 to 133 coordinates ATP; the sequence is GTHGKTT.

It belongs to the MurCDEF family.

The protein resides in the cytoplasm. The catalysed reaction is UDP-N-acetyl-alpha-D-muramate + L-alanine + ATP = UDP-N-acetyl-alpha-D-muramoyl-L-alanine + ADP + phosphate + H(+). The protein operates within cell wall biogenesis; peptidoglycan biosynthesis. In terms of biological role, cell wall formation. The chain is UDP-N-acetylmuramate--L-alanine ligase from Shewanella putrefaciens (strain CN-32 / ATCC BAA-453).